Reading from the N-terminus, the 180-residue chain is Inner membrane-spanning protein YciB (180 aa).

Helical transmembrane passes span 11–31 (ILFF…ALII), 52–72 (IIMG…NKVE), 76–96 (WKVT…QYGF), 121–141 (LAWA…SQYC), and 149–169 (FKSF…GIYV).

Belongs to the YciB family.

The protein localises to the cell inner membrane. Plays a role in cell envelope biogenesis, maintenance of cell envelope integrity and membrane homeostasis. The polypeptide is Inner membrane-spanning protein YciB (Mannheimia succiniciproducens (strain KCTC 0769BP / MBEL55E)).